Consider the following 335-residue polypeptide: 7,8-didemethyl-8-hydroxy-5-deazariboflavin synthase (335 aa).

Positions 1–246 constitute a Radical SAM core domain; sequence MTYSKNVFIP…QVAPNLIDPK (246 aa). Residues Cys15, Cys19, and Cys22 each coordinate [4Fe-4S] cluster.

It belongs to the radical SAM superfamily. CofG family. In terms of assembly, consists of two subunits, CofG and CofH. [4Fe-4S] cluster is required as a cofactor.

It catalyses the reaction 5-amino-5-(4-hydroxybenzyl)-6-(D-ribitylimino)-5,6-dihydrouracil + S-adenosyl-L-methionine = 7,8-didemethyl-8-hydroxy-5-deazariboflavin + 5'-deoxyadenosine + L-methionine + NH4(+) + H(+). It participates in cofactor biosynthesis; coenzyme F0 biosynthesis. Its function is as follows. Catalyzes the radical-mediated synthesis of 7,8-didemethyl-8-hydroxy-5-deazariboflavin from 5-amino-5-(4-hydroxybenzyl)-6-(D-ribitylimino)-5,6-dihydrouracil. The sequence is that of 7,8-didemethyl-8-hydroxy-5-deazariboflavin synthase from Methanosarcina mazei (strain ATCC BAA-159 / DSM 3647 / Goe1 / Go1 / JCM 11833 / OCM 88) (Methanosarcina frisia).